A 422-amino-acid polypeptide reads, in one-letter code: Phagosome assembly factor 1 (422 aa).

Belongs to the PHAF1 family. In terms of assembly, interacts with BCAS3; the interaction is requrired for the association with the phagophore.

It is found in the cytoplasm. The protein localises to the preautophagosomal structure. Plays a regulatory role in autophagic activity. In complex with BCAS3, associates with the autophagosome formation site during both non-selective and selective autophagy. This chain is Phagosome assembly factor 1 (Phaf1), found in Rattus norvegicus (Rat).